Reading from the N-terminus, the 186-residue chain is MRKDETSNTSPDISVAQPASALRYHLRPPRRNDGAAIHQLVSECPPLDLNSLYAYLLLCEHHAHTCVVAESPGGRIDGFVSAYLLPTRPDVLFVWQVAVHSRARGHRLGRAMLGHILERQECRHVRHLETTVGPDNQASRRTFAGLAGERGAHVSEQPFFDRQAFGGADHDDEMLLRIGPFTHPPH.

Residues 24–179 enclose the N-acetyltransferase domain; the sequence is YHLRPPRRND…HDDEMLLRIG (156 aa).

The protein belongs to the acetyltransferase family. EctA subfamily.

The catalysed reaction is L-2,4-diaminobutanoate + acetyl-CoA = (2S)-4-acetamido-2-aminobutanoate + CoA + H(+). Its pathway is amine and polyamine biosynthesis; ectoine biosynthesis; L-ectoine from L-aspartate 4-semialdehyde: step 2/3. In terms of biological role, catalyzes the acetylation of L-2,4-diaminobutyrate (DABA) to gamma-N-acetyl-alpha,gamma-diaminobutyric acid (ADABA) with acetyl coenzyme A. This is L-2,4-diaminobutyric acid acetyltransferase (ectA) from Bordetella parapertussis (strain 12822 / ATCC BAA-587 / NCTC 13253).